The sequence spans 1078 residues: Extracellular calcium-sensing receptor (1078 aa).

The N-terminal stretch at 1 to 19 is a signal peptide; that stretch reads MAFYSCCWVLLALTWHTSA. The Extracellular segment spans residues 20-610; sequence YGPDQRAQKK…KEIEFLSWTE (591 aa). Residues 22–188 are ligand-binding 1 (LB1); that stretch reads PDQRAQKKGD…QFKSFLRTIP (167 aa). A disulfide bridge links C60 with C101. 66 to 70 lines the phosphate pocket; the sequence is RGFRW. The Ca(2+) site is built by I81, S84, L87, and L88. An N-linked (GlcNAc...) asparagine glycan is attached at N90. T100 lines the Ca(2+) pocket. The N-linked (GlcNAc...) asparagine glycan is linked to N130. Residue T145 coordinates Ca(2+). L-tryptophan is bound by residues S147, A168, and S170. Positions 170, 188, 190, 231, and 234 each coordinate Ca(2+). The interval 189–324 is ligand-binding 2 (LB2); it reads NDEHQATAMA…GGTIGFALKA (136 aa). 7 disulfide bridges follow: C236–C561, C358–C395, C437–C449, C542–C562, C546–C565, C568–C582, and C585–C598. 2 residues coordinate spermine: D238 and S240. N261 and N287 each carry an N-linked (GlcNAc...) asparagine glycan. Residue E297 participates in Ca(2+) binding. E297 lines the L-tryptophan pocket. Residues N386 and N400 are each glycosylated (N-linked (GlcNAc...) asparagine). 415–417 contributes to the phosphate binding site; the sequence is RIS. N-linked (GlcNAc...) asparagine glycosylation is found at N446, N468, and N488. Y489 is a Ca(2+) binding site. The N-linked (GlcNAc...) asparagine glycan is linked to N541. Residues 542–612 are cysteine-rich (CR); sequence CSRDCLAGTR…IEFLSWTEPF (71 aa). G557 provides a ligand contact to Ca(2+). Residue N594 is glycosylated (N-linked (GlcNAc...) asparagine). Residues 611–636 form a helical membrane-spanning segment; it reads PFGIALTLFAVLGIFLTAFVLGVFIK. Topologically, residues 637–648 are cytoplasmic; that stretch reads FRNTPIVKATNR. Residues 637–648 are intracellular loop 1 (ICL1); the sequence is FRNTPIVKATNR. Residues 649–668 form a helical membrane-spanning segment; sequence ELSYLLLFSLLCCFSSSLFF. Residues 669–674 lie on the Extracellular side of the membrane; the sequence is IGEPQD. A helical transmembrane segment spans residues 675–698; the sequence is WTCRLRQPAFGISFVLCISCILVK. The Cytoplasmic segment spans residues 699–722; sequence TNRVLLVFEAKIPTSFHRKWWGLN. The segment at 699 to 722 is intracellular loop 2 (ICL2); sequence TNRVLLVFEAKIPTSFHRKWWGLN. Residues 723 to 745 form a helical membrane-spanning segment; it reads LQFLLVFLCTFMQIVICVIWLYT. The Extracellular segment spans residues 746 to 769; it reads APPSSYRNQELEDEIIFITCHEGS. A helical transmembrane segment spans residues 770–789; the sequence is LMALGFLIGYTCLLAAICFF. The Cytoplasmic segment spans residues 790–805; sequence FAFKSRKLPENFNEAK. Residues 790–805 are intracellular loop 3 (ICL3); sequence FAFKSRKLPENFNEAK. The helical transmembrane segment at 806-828 threads the bilayer; sequence FITFSMLIFFIVWISFIPAYAST. The Extracellular portion of the chain corresponds to 829-832; it reads YGKF. The helical transmembrane segment at 833-854 threads the bilayer; sequence VSAVEVIAILAASFGLLACIFF. The Cytoplasmic portion of the chain corresponds to 855–1078; it reads NKIYIILFKP…STVTENVVNS (224 aa). The tract at residues 855–1078 is C-terminus; the sequence is NKIYIILFKP…STVTENVVNS (224 aa). An interaction with RNF19A region spans residues 880–900; that stretch reads AFKVAARATLRRSNVSRKRSS. Residue T888 is modified to Phosphothreonine; by PKC. Residues 890 to 898 form an arginine-rich retention motif region; that stretch reads RRSNVSRKR. S892 is subject to Phosphoserine; by PKC. 3 disordered regions span residues 892 to 963, 986 to 1006, and 1030 to 1055; these read SNVS…PRCK, AMAH…SSDT, and TGLQ…PALV. S899 carries the phosphoserine; by PKA modification. Residues 900–918 are compositionally biased toward low complexity; sequence SSLGGSTGSTPSSSISSKS. S920 is modified (phosphoserine). The segment covering 932-960 has biased composition (low complexity); that stretch reads QQQPLALTQQEQQQQPLTLPQQQRSQQQP. The segment covering 993 to 1006 has biased composition (polar residues); that stretch reads THQNSLEAQKSSDT. S1061 is subject to Phosphoserine.

This sequence belongs to the G-protein coupled receptor 3 family. In terms of assembly, homodimer; disulfide-linked. Interacts with VCP. Interacts with ARRB1. Post-translationally, phosphorylation at Thr-888 by PKC impairs coupling with G(q)/G(11) G-proteins, while it does not affect G(i)/G(o)-coupling. Phosphorylation at Ser-892 by PKC and Ser-899 by PKA promote plasma membrane localization. In terms of processing, ubiquitinated by RNF19A; which induces proteasomal degradation. N-glycosylated. In terms of tissue distribution, expressed in the temporal lobe, frontal lobe, parietal lobe, hippocampus, and cerebellum. Also found in kidney, lung, liver, heart, skeletal muscle, placenta.

Its subcellular location is the cell membrane. With respect to regulation, in resting state, adopts an open conformation, anion-binding promoting the inactive configuration. Upon aromatic amino acid-binding, the groove in the extracellular venus flytrap module is closed, thereby inducing the formation of a novel homodimer interface between subunits. Calcium ions stabilize the active state by enhancing homodimer interactions between membrane-proximal domains to fully activate the receptor. Upon activation, the homodimer adopts an asymmetric configuration of the 7-transmembrane region that primes one protomer for G-protein coupling. G-protein binding expands the transmembrane dimer interface; the restriction imposed by the receptor dimer, in combination with intracellular loop 2 (ICL2), enables G-protein activation by facilitating conformational transition of G-protein alpha. Coupling to different classes of G-proteins results in distinct CASR-G-protein interfaces. Activated by glucose, which acts as a positive allosteric modulator. Activated by positive allosteric modulator drugs cinacalcet, evocalcet and etelcalcetide, which are clinically used for the treatment of hyperparathyroidism and familial hypocalciuric hypercalcemia. Inhibited by NPS-2143, a negative allosteric modulator tested for the treatment of hypocalcemia. Activated by velcalcetide (AMG 416), a D-amino acid-containing peptide agonist that is being evaluated for the treatment of secondary hyperparathyroidism in chronic kidney disease patients receiving hemodialysis. Velcalcetide agonist acts by forming a disulfide bond with Cys-482. In terms of biological role, G-protein-coupled receptor that senses changes in the extracellular concentration of calcium ions and plays a key role in maintaining calcium homeostasis. Senses fluctuations in the circulating calcium concentration: activated by elevated circulating calcium, leading to decreased parathyroid hormone (PTH) secretion in parathyroid glands. In kidneys, acts as a key regulator of renal tubular calcium resorption. Ligand binding causes a conformation change that triggers signaling via guanine nucleotide-binding proteins (G-proteins) and modulates the activity of downstream effectors. CASR is coupled with different G(q)/G(11), G(i)/G(o)- or G(s)-classes of G-proteins depending on the context. In the parathyroid and kidney, CASR signals through G(q)/G(11) and G(i)/G(o) G-proteins: G(q)/G(11) coupling activates phospholipase C-beta, releasing diacylglycerol (DAG) and inositol 1,4,5-trisphosphate (IP3) second messengers, while G(i)/G(o) coupling mediates inhibition of adenylate cyclase activity. The G-protein-coupled receptor activity is activated by a co-agonist mechanism: aromatic amino acids, such as Trp or Phe, act concertedly with divalent cations, such as calcium or magnesium, to achieve full receptor activation. Acts as an activator of the NLRP3 inflammasome via G(i)/G(o)-mediated signaling: down-regulation of cyclic AMP (cAMP) relieving NLRP3 inhibition by cAMP. Acts as a regulator of proton-sensing receptor GPR68 in a seesaw manner: CASR-mediated signaling inhibits GPR68 signaling in response to extracellular calcium, while GPR68 inhibits CASR in presence of extracellular protons. This is Extracellular calcium-sensing receptor from Homo sapiens (Human).